The following is a 370-amino-acid chain: Trans-enoyl reductase xenG (370 aa).

The disordered stretch occupies residues Met1–Arg32. Residues Cys54–Lys57, Ser177–Ser180, Ser200–Asn203, Tyr218, Phe265–Glu266, and Val356–Ser357 each bind NADP(+).

Belongs to the zinc-containing alcohol dehydrogenase family. As to quaternary structure, monomer.

Its pathway is mycotoxin biosynthesis. Trans-enoyl reductase; part of the gene cluster that mediates the biosynthesis of xenoacremones such as xenoacremone A, a compound that shows inhibitory activity toward the PI3K/AKT signaling pathway and which has the ability to induce apoptosis of A549 lung cancer cells. Within the pathway, cooperation of the hybrid PKS-NRPS xenE and the trans-acting enoyl reductase xenG is responsible for the formation of the reduced tyrosine-nonaketide derivative. The alpha/beta hydrolase xenA then accelerates intramolecular nucleophilic attack to give a pyrrolidone derivative. Subsequently, three enzymes, xenF, xenD, and xenC, coordinately participate in the conversion to xenoacremone B. XenF catalyzes sigmatropic rearrangement to form an A-ring, which leads to an unusual intermediate with a hexane ring, which is required for the formation of the tricarbocyclic product. Epoxidation catalyzed by xenD and the formation of the paracyclophane ether catalyzed by xenC initiate a spontaneous intramolecular Diels-Alder (IMDA) reaction to yield xenoacremone B. Spontaneous hydration of xenoacremone B leads to the formation of xenoacremone A, which undergoes subsequent methylation to afford xenoacremone C. The sequence is that of Trans-enoyl reductase xenG from Xenoacremonium sinensis (Endophyte fungus).